Consider the following 444-residue polypeptide: P2X purinoceptor 5 (444 aa).

Residues 1 to 30 (MGQAGCKGLCLSLFDYKTEKYVIAKNKKVG) are Cytoplasmic-facing. Residues 31–51 (LLYRLLQASILAYLVVWVFLI) form a helical membrane-spanning segment. Topologically, residues 52–319 (KKGYQDVDTS…RTLMKAYGIR (268 aa)) are extracellular. The N-linked (GlcNAc...) asparagine glycan is linked to Asn77. Disulfide bonds link Cys118–Cys169, Cys129–Cys152, and Cys135–Cys163. Asn202 carries an N-linked (GlcNAc...) asparagine glycan. Disulfide bonds link Cys220–Cys229 and Cys263–Cys272. The helical transmembrane segment at 320 to 362 (FDVMVNGKAGKFSIIPTIINVGSGVALMGAGAFFCDLVLIYLI) threads the bilayer. Residues 363 to 444 (KKREFYRDKK…PQLLEPHRST (82 aa)) are Cytoplasmic-facing. The tract at residues 378–444 (GLEDSSQEAE…PQLLEPHRST (67 aa)) is disordered.

Belongs to the P2X receptor family. In terms of assembly, functional P2XRs are organized as homomeric and heteromeric trimers. Homotrimer. Forms heterotrimer with P2RX1. In terms of tissue distribution, expressed at high levels in brain and immune system.

It is found in the cell membrane. The enzyme catalyses Na(+)(in) = Na(+)(out). It catalyses the reaction Ca(2+)(in) = Ca(2+)(out). It carries out the reaction chloride(in) = chloride(out). With respect to regulation, activated by ATP. Slowly desensitizing. Sensitive to the ATP agonist alpha/beta-methylene-ATP. Functionally, ATP-gated nonselective transmembrane cation channel permeable to potassium, sodium and calcium. Unlike other P2RX receptors, the P2X5 receptor is also permeable to chloride. May play a supporting role in the inflammatory response. Non-functional. The sequence is that of P2X purinoceptor 5 from Homo sapiens (Human).